The primary structure comprises 104 residues: Nucleoid-associated protein Bsph_0039 (104 aa).

Over residues 1 to 12 (MRGMGNMQGMMK) the composition is skewed to low complexity. The segment at 1–22 (MRGMGNMQGMMKKMQKMQKEMM) is disordered.

The protein belongs to the YbaB/EbfC family. Homodimer.

The protein resides in the cytoplasm. Its subcellular location is the nucleoid. Binds to DNA and alters its conformation. May be involved in regulation of gene expression, nucleoid organization and DNA protection. This is Nucleoid-associated protein Bsph_0039 from Lysinibacillus sphaericus (strain C3-41).